We begin with the raw amino-acid sequence, 364 residues long: tRNA N6-adenosine threonylcarbamoyltransferase (364 aa).

2 residues coordinate Fe cation: histidine 118 and histidine 122. Residues 140-144 (LVSGG), aspartate 173, glycine 186, and asparagine 288 each bind substrate. Aspartate 316 contacts Fe cation.

Belongs to the KAE1 / TsaD family. Fe(2+) is required as a cofactor.

The protein localises to the cytoplasm. It carries out the reaction L-threonylcarbamoyladenylate + adenosine(37) in tRNA = N(6)-L-threonylcarbamoyladenosine(37) in tRNA + AMP + H(+). Required for the formation of a threonylcarbamoyl group on adenosine at position 37 (t(6)A37) in tRNAs that read codons beginning with adenine. Is involved in the transfer of the threonylcarbamoyl moiety of threonylcarbamoyl-AMP (TC-AMP) to the N6 group of A37, together with TsaE and TsaB. TsaD likely plays a direct catalytic role in this reaction. In Cereibacter sphaeroides (strain KD131 / KCTC 12085) (Rhodobacter sphaeroides), this protein is tRNA N6-adenosine threonylcarbamoyltransferase.